The sequence spans 156 residues: ATP synthase subunit b (156 aa).

A helical membrane pass occupies residues 7-27 (LIGQTVAFIIFVWFCMKFVWP).

Belongs to the ATPase B chain family. In terms of assembly, F-type ATPases have 2 components, F(1) - the catalytic core - and F(0) - the membrane proton channel. F(1) has five subunits: alpha(3), beta(3), gamma(1), delta(1), epsilon(1). F(0) has three main subunits: a(1), b(2) and c(10-14). The alpha and beta chains form an alternating ring which encloses part of the gamma chain. F(1) is attached to F(0) by a central stalk formed by the gamma and epsilon chains, while a peripheral stalk is formed by the delta and b chains.

The protein localises to the cell inner membrane. F(1)F(0) ATP synthase produces ATP from ADP in the presence of a proton or sodium gradient. F-type ATPases consist of two structural domains, F(1) containing the extramembraneous catalytic core and F(0) containing the membrane proton channel, linked together by a central stalk and a peripheral stalk. During catalysis, ATP synthesis in the catalytic domain of F(1) is coupled via a rotary mechanism of the central stalk subunits to proton translocation. In terms of biological role, component of the F(0) channel, it forms part of the peripheral stalk, linking F(1) to F(0). This chain is ATP synthase subunit b, found in Shewanella oneidensis (strain ATCC 700550 / JCM 31522 / CIP 106686 / LMG 19005 / NCIMB 14063 / MR-1).